Reading from the N-terminus, the 499-residue chain is Lysine--tRNA ligase (499 aa).

Mg(2+) is bound by residues glutamate 408 and glutamate 415.

It belongs to the class-II aminoacyl-tRNA synthetase family. In terms of assembly, homodimer. The cofactor is Mg(2+).

It is found in the cytoplasm. The catalysed reaction is tRNA(Lys) + L-lysine + ATP = L-lysyl-tRNA(Lys) + AMP + diphosphate. This chain is Lysine--tRNA ligase, found in Bacillus cereus (strain ATCC 10987 / NRS 248).